A 126-amino-acid polypeptide reads, in one-letter code: Large ribosomal subunit protein bL12 (126 aa).

The protein belongs to the bacterial ribosomal protein bL12 family. As to quaternary structure, homodimer. Part of the ribosomal stalk of the 50S ribosomal subunit. Forms a multimeric L10(L12)X complex, where L10 forms an elongated spine to which 2 to 4 L12 dimers bind in a sequential fashion. Binds GTP-bound translation factors.

Its function is as follows. Forms part of the ribosomal stalk which helps the ribosome interact with GTP-bound translation factors. Is thus essential for accurate translation. The polypeptide is Large ribosomal subunit protein bL12 (Desulforudis audaxviator (strain MP104C)).